Here is a 702-residue protein sequence, read N- to C-terminus: Polyribonucleotide nucleotidyltransferase (702 aa).

Positions 485 and 491 each coordinate Mg(2+). The KH domain occupies 552–611 (PKTSTLQIDPEKIRDVIGAGGKVINKIIADTGVKIDIKEDGLVYVSSAESEGVKEAVKII). Residues 621 to 689 (GEIYLGKVTK…SQGRINLSRK (69 aa)) enclose the S1 motif domain.

Belongs to the polyribonucleotide nucleotidyltransferase family. Mg(2+) serves as cofactor.

It is found in the cytoplasm. It carries out the reaction RNA(n+1) + phosphate = RNA(n) + a ribonucleoside 5'-diphosphate. Involved in mRNA degradation. Catalyzes the phosphorolysis of single-stranded polyribonucleotides processively in the 3'- to 5'-direction. In Clostridium perfringens (strain ATCC 13124 / DSM 756 / JCM 1290 / NCIMB 6125 / NCTC 8237 / Type A), this protein is Polyribonucleotide nucleotidyltransferase.